Here is a 449-residue protein sequence, read N- to C-terminus: 3-phosphoshikimate 1-carboxyvinyltransferase (449 aa).

Residues Lys-28, Ser-29, and Arg-33 each coordinate 3-phosphoshikimate. Residue Lys-28 participates in phosphoenolpyruvate binding. 2 residues coordinate phosphoenolpyruvate: Gly-105 and Arg-133. 3-phosphoshikimate contacts are provided by Ser-179, Gln-181, Asp-332, and Lys-359. Gln-181 provides a ligand contact to phosphoenolpyruvate. Residue Asp-332 is the Proton acceptor of the active site. Arg-363 and Arg-406 together coordinate phosphoenolpyruvate.

It belongs to the EPSP synthase family. As to quaternary structure, monomer.

It is found in the cytoplasm. It carries out the reaction 3-phosphoshikimate + phosphoenolpyruvate = 5-O-(1-carboxyvinyl)-3-phosphoshikimate + phosphate. It participates in metabolic intermediate biosynthesis; chorismate biosynthesis; chorismate from D-erythrose 4-phosphate and phosphoenolpyruvate: step 6/7. Its function is as follows. Catalyzes the transfer of the enolpyruvyl moiety of phosphoenolpyruvate (PEP) to the 5-hydroxyl of shikimate-3-phosphate (S3P) to produce enolpyruvyl shikimate-3-phosphate and inorganic phosphate. The chain is 3-phosphoshikimate 1-carboxyvinyltransferase from Nitrobacter hamburgensis (strain DSM 10229 / NCIMB 13809 / X14).